The primary structure comprises 256 residues: Hemolymph lipopolysaccharide-binding protein (256 aa).

A signal peptide spans 1-21 (MMNTRALLPLSVLLMATLCLC). Residues 22 to 33 (ELPIPILQRFVR) constitute a propeptide that is removed on maturation. N-linked (GlcNAc...) asparagine glycosylation is present at N56. The C-type lectin domain occupies 146–256 (IICQQEGGHL…KLPFVCEVEL (111 aa)). 2 cysteine pairs are disulfide-bonded: C148–C252 and C230–C244.

In terms of tissue distribution, hemolymph.

The protein resides in the secreted. Its function is as follows. Participates probably in the elimination of foreign substances invading the insect abdominal cavity, and in trapping intracellular symbionts, when they leak from the mycetomes into the hemolymph. The polypeptide is Hemolymph lipopolysaccharide-binding protein (Periplaneta americana (American cockroach)).